The primary structure comprises 501 residues: Glycogen synthase 1 (501 aa).

Lys18 lines the ADP-alpha-D-glucose pocket.

This sequence belongs to the glycosyltransferase 1 family. Bacterial/plant glycogen synthase subfamily.

It carries out the reaction [(1-&gt;4)-alpha-D-glucosyl](n) + ADP-alpha-D-glucose = [(1-&gt;4)-alpha-D-glucosyl](n+1) + ADP + H(+). Its pathway is glycan biosynthesis; glycogen biosynthesis. Functionally, synthesizes alpha-1,4-glucan chains using ADP-glucose. The sequence is that of Glycogen synthase 1 from Geobacter sulfurreducens (strain ATCC 51573 / DSM 12127 / PCA).